We begin with the raw amino-acid sequence, 478 residues long: MTLSFVTRWRDELPETYTALSPTPLNNARLIWHNTELANTLSIPSSLFKNGAGVWGGEALLPGMSPLAQVYSGHQFGVWAGQLGDGRGILLGEQLLADGTTMDWHLKGAGLTPYSRMGDGRAVLRSTIRESLASEAMHYLGIPTTRALSIVTSDSPVYRETAEPGAMLMRVAPSHLRFGHFEHFYYRRESEKVRQLADFAIRHYWSHLEDDEDKYRLWFSDVVARTASLIAQWQTVGFAHGVMNTDNMSLLGLTLDYGPFGFLDDYEPGFICNHSDHQGRYSFDNQPAVALWNLQRLAQTLSPFVAVDALNEALDSYQQVLLTHYGQRMRQKLGFMTEQKEDNALLNELFSLMARERSDYTRTFRMLSLTEQHSAASPLRDEFIDRAAFDDWFARYRGRLQQDEVSDSERQQLMQSVNPALVLRNWLAQRAIEAAEKGDMMELHRLHEALRNPFSDRDDDYVSRPPDWGKRLEVSCSS.

Residues G84, G86, R87, K107, D119, G120, R170, and R177 each coordinate ATP. Catalysis depends on D246, which acts as the Proton acceptor. Mg(2+)-binding residues include N247 and D256. D256 lines the ATP pocket.

Belongs to the SELO family. It depends on Mg(2+) as a cofactor. Mn(2+) serves as cofactor.

It carries out the reaction L-seryl-[protein] + ATP = 3-O-(5'-adenylyl)-L-seryl-[protein] + diphosphate. It catalyses the reaction L-threonyl-[protein] + ATP = 3-O-(5'-adenylyl)-L-threonyl-[protein] + diphosphate. The catalysed reaction is L-tyrosyl-[protein] + ATP = O-(5'-adenylyl)-L-tyrosyl-[protein] + diphosphate. The enzyme catalyses L-histidyl-[protein] + UTP = N(tele)-(5'-uridylyl)-L-histidyl-[protein] + diphosphate. It carries out the reaction L-seryl-[protein] + UTP = O-(5'-uridylyl)-L-seryl-[protein] + diphosphate. It catalyses the reaction L-tyrosyl-[protein] + UTP = O-(5'-uridylyl)-L-tyrosyl-[protein] + diphosphate. Nucleotidyltransferase involved in the post-translational modification of proteins. It can catalyze the addition of adenosine monophosphate (AMP) or uridine monophosphate (UMP) to a protein, resulting in modifications known as AMPylation and UMPylation. The polypeptide is Protein nucleotidyltransferase YdiU (Escherichia coli (strain ATCC 8739 / DSM 1576 / NBRC 3972 / NCIMB 8545 / WDCM 00012 / Crooks)).